The following is a 194-amino-acid chain: Isopentenyl-diphosphate Delta-isomerase (194 aa).

2 residues coordinate Mn(2+): His27 and His34. The region spanning 32-166 is the Nudix hydrolase domain; sequence ALHLAFSCHV…PWAFSPWLTL (135 aa). Cys69 is an active-site residue. His71 contributes to the Mn(2+) binding site. Glu89 is a binding site for Mg(2+). Mn(2+) contacts are provided by Glu116 and Glu118. The active site involves Glu118.

This sequence belongs to the IPP isomerase type 1 family. It depends on Mg(2+) as a cofactor. The cofactor is Mn(2+).

The protein localises to the cytoplasm. It carries out the reaction isopentenyl diphosphate = dimethylallyl diphosphate. Its pathway is isoprenoid biosynthesis; dimethylallyl diphosphate biosynthesis; dimethylallyl diphosphate from isopentenyl diphosphate: step 1/1. Its function is as follows. Catalyzes the 1,3-allylic rearrangement of the homoallylic substrate isopentenyl (IPP) to its highly electrophilic allylic isomer, dimethylallyl diphosphate (DMAPP). This chain is Isopentenyl-diphosphate Delta-isomerase, found in Clavibacter michiganensis subsp. michiganensis (strain NCPPB 382).